Here is a 136-residue protein sequence, read N- to C-terminus: uncharacterized protein (136 aa).

The protein to E.coli YcgX and YdfO.

This is an uncharacterized protein from Escherichia coli (strain K12).